The chain runs to 180 residues: Large ribosomal subunit protein uL10 (180 aa).

The disordered stretch occupies residues 161 to 180 (SKAEGSEETESNETTETVEE). Residues 166-180 (SEETESNETTETVEE) are compositionally biased toward acidic residues.

It belongs to the universal ribosomal protein uL10 family. In terms of assembly, part of the ribosomal stalk of the 50S ribosomal subunit. The N-terminus interacts with L11 and the large rRNA to form the base of the stalk. The C-terminus forms an elongated spine to which L12 dimers bind in a sequential fashion forming a multimeric L10(L12)X complex.

In terms of biological role, forms part of the ribosomal stalk, playing a central role in the interaction of the ribosome with GTP-bound translation factors. This is Large ribosomal subunit protein uL10 from Finegoldia magna (strain ATCC 29328 / DSM 20472 / WAL 2508) (Peptostreptococcus magnus).